The following is a 360-amino-acid chain: Alpha-2-macroglobulin receptor-associated protein (360 aa).

The N-terminal stretch at 1–28 (MAPRRERVSTLPRLQLLVLLLLPLMLVP) is a signal peptide. A phosphoserine mark is found at serine 53 and serine 138. Residues 184–302 (EKIQEYNVLL…KHNHYQKQLE (119 aa)) are a coiled coil. An LDL receptor binding region spans residues 240–356 (RLRKVSHQGY…DLSSRVSRAR (117 aa)). Asparagine 271 carries an N-linked (GlcNAc...) asparagine glycan. Residues 357-360 (HNEL) carry the Prevents secretion from ER motif.

This sequence belongs to the alpha-2-MRAP family. As to quaternary structure, interacts with the LRP1/alpha-2-macroglobulin receptor heavy and light chains; the interaction is transient and coincides with a reduction of ligand binding by the receptor. Interacts with LRP2/glycoprotein 330. Interacts with LRP1B; binding is followed by internalization and degradation. Interacts with LDLR. Interacts with SORL1. Interacts with LRP1; this interaction is followed by rapid internalization. In terms of processing, N-glycosylated. In terms of tissue distribution, highly expressed in PYS-2 parietal endoderm cells and in the kidney. The RNA level increased about 10-fold during differentiation of F9 embryonal carcinoma cells to parietal endoderm cells.

It is found in the rough endoplasmic reticulum lumen. It localises to the endoplasmic reticulum-Golgi intermediate compartment lumen. Its subcellular location is the golgi apparatus. The protein resides in the cis-Golgi network. The protein localises to the golgi apparatus lumen. It is found in the endosome lumen. It localises to the cell surface. Functionally, molecular chaperone for LDL receptor-related proteins that may regulate their ligand binding activity along the secretory pathway. The polypeptide is Alpha-2-macroglobulin receptor-associated protein (Lrpap1) (Mus musculus (Mouse)).